Reading from the N-terminus, the 494-residue chain is Alpha-amylase-related protein (494 aa).

An N-terminal signal peptide occupies residues 1–20 (MIKFALALTLCLAGASLSLA). Position 21 is a pyrrolidone carboxylic acid (Gln-21). Cysteines 48 and 104 form a disulfide. The Ca(2+) site is built by Asn-118, Gln-169, and Asp-178. Cys-157 and Cys-171 are joined by a disulfide. Arg-206 contributes to the chloride binding site. The Nucleophile role is filled by Asp-208. His-212 is a Ca(2+) binding site. Residue Glu-245 is the Proton donor of the active site. Residues Asn-308 and Arg-343 each coordinate chloride. Cystine bridges form between Cys-376–Cys-382, Cys-418–Cys-441, and Cys-448–Cys-460.

Belongs to the glycosyl hydrolase 13 family. In terms of assembly, monomer. Ca(2+) is required as a cofactor. Requires chloride as cofactor.

The protein localises to the secreted. It carries out the reaction Endohydrolysis of (1-&gt;4)-alpha-D-glucosidic linkages in polysaccharides containing three or more (1-&gt;4)-alpha-linked D-glucose units.. This is Alpha-amylase-related protein (Amyrel) from Drosophila jambulina (Fruit fly).